The chain runs to 98 residues: C-X-C motif chemokine 10 (98 aa).

The first 21 residues, 1–21 (MNQTAILICCLVFLTLSGIQG), serve as a signal peptide directing secretion. Residue R26 is modified to Citrulline. Disulfide bonds link C30-C57 and C32-C74.

Belongs to the intercrine alpha (chemokine CxC) family.

The protein localises to the secreted. Its function is as follows. Chemotactic for monocytes and T-lymphocytes. Binds to CXCR3. The sequence is that of C-X-C motif chemokine 10 (CXCL10) from Macaca mulatta (Rhesus macaque).